Consider the following 179-residue polypeptide: Adenine phosphoribosyltransferase (179 aa).

The protein belongs to the purine/pyrimidine phosphoribosyltransferase family. Homodimer.

It localises to the cytoplasm. It carries out the reaction AMP + diphosphate = 5-phospho-alpha-D-ribose 1-diphosphate + adenine. It functions in the pathway purine metabolism; AMP biosynthesis via salvage pathway; AMP from adenine: step 1/1. Functionally, catalyzes a salvage reaction resulting in the formation of AMP, that is energically less costly than de novo synthesis. This is Adenine phosphoribosyltransferase from Helicobacter pylori (strain ATCC 700392 / 26695) (Campylobacter pylori).